Reading from the N-terminus, the 187-residue chain is Large ribosomal subunit protein mL49 (187 aa).

It belongs to the mitochondrion-specific ribosomal protein mL49 family.

Its subcellular location is the mitochondrion. This Caenorhabditis elegans protein is Large ribosomal subunit protein mL49 (mrpl-49).